The primary structure comprises 139 residues: Large ribosomal subunit protein eL34 (139 aa).

The segment at Val-113–Lys-139 is disordered.

This sequence belongs to the eukaryotic ribosomal protein eL34 family.

The sequence is that of Large ribosomal subunit protein eL34 (RpL34) from Ochlerotatus triseriatus (Eastern treehole mosquito).